We begin with the raw amino-acid sequence, 456 residues long: Bifunctional protein GlmU (456 aa).

The tract at residues methionine 1 to lysine 228 is pyrophosphorylase. UDP-N-acetyl-alpha-D-glucosamine-binding positions include leucine 11–glycine 14, lysine 25, glutamine 75, glycine 80–threonine 81, tyrosine 102–aspartate 104, glycine 138, glutamate 153, asparagine 168, and asparagine 226. Mg(2+) is bound at residue aspartate 104. Mg(2+) is bound at residue asparagine 226. Residues arginine 229–alanine 249 are linker. Residues glycine 250–glutamine 456 are N-acetyltransferase. Arginine 332 and lysine 350 together coordinate UDP-N-acetyl-alpha-D-glucosamine. The active-site Proton acceptor is histidine 362. Positions 365 and 376 each coordinate UDP-N-acetyl-alpha-D-glucosamine. Residues alanine 379, asparagine 385–tyrosine 386, serine 404, alanine 422, and arginine 439 each bind acetyl-CoA.

The protein in the N-terminal section; belongs to the N-acetylglucosamine-1-phosphate uridyltransferase family. In the C-terminal section; belongs to the transferase hexapeptide repeat family. As to quaternary structure, homotrimer. The cofactor is Mg(2+).

The protein resides in the cytoplasm. The catalysed reaction is alpha-D-glucosamine 1-phosphate + acetyl-CoA = N-acetyl-alpha-D-glucosamine 1-phosphate + CoA + H(+). It carries out the reaction N-acetyl-alpha-D-glucosamine 1-phosphate + UTP + H(+) = UDP-N-acetyl-alpha-D-glucosamine + diphosphate. It participates in nucleotide-sugar biosynthesis; UDP-N-acetyl-alpha-D-glucosamine biosynthesis; N-acetyl-alpha-D-glucosamine 1-phosphate from alpha-D-glucosamine 6-phosphate (route II): step 2/2. The protein operates within nucleotide-sugar biosynthesis; UDP-N-acetyl-alpha-D-glucosamine biosynthesis; UDP-N-acetyl-alpha-D-glucosamine from N-acetyl-alpha-D-glucosamine 1-phosphate: step 1/1. Its pathway is bacterial outer membrane biogenesis; LPS lipid A biosynthesis. In terms of biological role, catalyzes the last two sequential reactions in the de novo biosynthetic pathway for UDP-N-acetylglucosamine (UDP-GlcNAc). The C-terminal domain catalyzes the transfer of acetyl group from acetyl coenzyme A to glucosamine-1-phosphate (GlcN-1-P) to produce N-acetylglucosamine-1-phosphate (GlcNAc-1-P), which is converted into UDP-GlcNAc by the transfer of uridine 5-monophosphate (from uridine 5-triphosphate), a reaction catalyzed by the N-terminal domain. This Neisseria gonorrhoeae protein is Bifunctional protein GlmU.